The sequence spans 194 residues: Adenylate kinase isoenzyme 1 (194 aa).

N-acetylalanine is present on alanine 2. 18-23 (GSGKGT) is a binding site for ATP. Positions 38 to 67 (SSGDLLRAEVASGSERGKQLQAIMQKGELV) are NMP. Residues serine 39, arginine 44, 65–67 (ELV), 94–97 (GYPR), and glutamine 101 each bind AMP. Residues 131-141 (KRGQTSGRSDD) are LID. Arginine 132 lines the ATP pocket. AMP contacts are provided by arginine 138 and arginine 149. Residue leucine 177 participates in ATP binding.

This sequence belongs to the adenylate kinase family. AK1 subfamily. As to quaternary structure, monomer. Mg(2+) is required as a cofactor.

It is found in the cytoplasm. It carries out the reaction a ribonucleoside 5'-phosphate + ATP = a ribonucleoside 5'-diphosphate + ADP. The enzyme catalyses AMP + ATP = 2 ADP. It catalyses the reaction dAMP + ATP = dADP + ADP. The catalysed reaction is dATP + AMP = dADP + ADP. It carries out the reaction dAMP + dATP = 2 dADP. The enzyme catalyses a 2'-deoxyribonucleoside 5'-diphosphate + ATP = a 2'-deoxyribonucleoside 5'-triphosphate + ADP. It catalyses the reaction a ribonucleoside 5'-diphosphate + ATP = a ribonucleoside 5'-triphosphate + ADP. The catalysed reaction is CDP + GTP = CTP + GDP. It carries out the reaction GDP + ATP = GTP + ADP. The enzyme catalyses UDP + ATP = UTP + ADP. It catalyses the reaction GTP + UDP = UTP + GDP. The catalysed reaction is dTDP + GTP = dTTP + GDP. It carries out the reaction dCDP + GTP = dCTP + GDP. The enzyme catalyses dGDP + ATP = dGTP + ADP. It catalyses the reaction dADP + GTP = dATP + GDP. The catalysed reaction is thiamine diphosphate + ADP = thiamine triphosphate + AMP. In terms of biological role, catalyzes the reversible transfer of the terminal phosphate group between ATP and AMP. Also displays broad nucleoside diphosphate kinase activity. Plays an important role in cellular energy homeostasis and in adenine nucleotide metabolism. Also catalyzes at a very low rate the synthesis of thiamine triphosphate (ThTP) from thiamine diphosphate (ThDP) and ADP. The sequence is that of Adenylate kinase isoenzyme 1 (ak1) from Cyprinus carpio (Common carp).